A 92-amino-acid chain; its full sequence is Small ribosomal subunit protein uS19 (92 aa).

The protein belongs to the universal ribosomal protein uS19 family.

Protein S19 forms a complex with S13 that binds strongly to the 16S ribosomal RNA. In Corynebacterium jeikeium (strain K411), this protein is Small ribosomal subunit protein uS19.